Here is a 204-residue protein sequence, read N- to C-terminus: Spermatogenesis-associated protein 46 (204 aa).

The tract at residues 101–120 (SSSSQENTYPREANRKSKHG) is disordered.

As to expression, testis-specific.

Its subcellular location is the nucleus membrane. Its function is as follows. Plays a role in spermiogenesis and fertilization. In Mus musculus (Mouse), this protein is Spermatogenesis-associated protein 46 (Spata46).